Here is a 335-residue protein sequence, read N- to C-terminus: Methionine aminopeptidase 1D, mitochondrial (335 aa).

The transit peptide at Met-1–Leu-19 directs the protein to the mitochondrion. Residue His-161 coordinates substrate. A divalent metal cation contacts are provided by Asp-178, Asp-189, and His-252. His-259 is a binding site for substrate. Residues Glu-284 and Glu-315 each contribute to the a divalent metal cation site.

It belongs to the peptidase M24A family. Methionine aminopeptidase type 1 subfamily. Co(2+) serves as cofactor. Requires Zn(2+) as cofactor. It depends on Mn(2+) as a cofactor. The cofactor is Fe(2+).

It is found in the mitochondrion. It carries out the reaction Release of N-terminal amino acids, preferentially methionine, from peptides and arylamides.. Its function is as follows. Removes the N-terminal methionine from nascent proteins. The N-terminal methionine is often cleaved when the second residue in the primary sequence is small and uncharged (Met-Ala-, Cys, Gly, Pro, Ser, Thr, or Val). Requires deformylation of the N(alpha)-formylated initiator methionine before it can be hydrolyzed. The sequence is that of Methionine aminopeptidase 1D, mitochondrial (Metap1d) from Mus musculus (Mouse).